Here is a 75-residue protein sequence, read N- to C-terminus: DNA-directed RNA polymerase subunit omega (75 aa).

Belongs to the RNA polymerase subunit omega family. In terms of assembly, the RNAP catalytic core consists of 2 alpha, 1 beta, 1 beta' and 1 omega subunit. When a sigma factor is associated with the core the holoenzyme is formed, which can initiate transcription.

The enzyme catalyses RNA(n) + a ribonucleoside 5'-triphosphate = RNA(n+1) + diphosphate. Its function is as follows. Promotes RNA polymerase assembly. Latches the N- and C-terminal regions of the beta' subunit thereby facilitating its interaction with the beta and alpha subunits. The chain is DNA-directed RNA polymerase subunit omega from Lysinibacillus sphaericus (strain C3-41).